Reading from the N-terminus, the 81-residue chain is ATP synthase subunit c, chloroplastic (81 aa).

2 helical membrane-spanning segments follow: residues 3–23 (PLIASASVIAAGLAVGLASIG) and 57–77 (LAFMEALTIYGLVVALALLFA).

Belongs to the ATPase C chain family. As to quaternary structure, F-type ATPases have 2 components, F(1) - the catalytic core - and F(0) - the membrane proton channel. F(1) has five subunits: alpha(3), beta(3), gamma(1), delta(1), epsilon(1). F(0) has four main subunits: a(1), b(1), b'(1) and c(10-14). The alpha and beta chains form an alternating ring which encloses part of the gamma chain. F(1) is attached to F(0) by a central stalk formed by the gamma and epsilon chains, while a peripheral stalk is formed by the delta, b and b' chains.

It localises to the plastid. It is found in the chloroplast thylakoid membrane. F(1)F(0) ATP synthase produces ATP from ADP in the presence of a proton or sodium gradient. F-type ATPases consist of two structural domains, F(1) containing the extramembraneous catalytic core and F(0) containing the membrane proton channel, linked together by a central stalk and a peripheral stalk. During catalysis, ATP synthesis in the catalytic domain of F(1) is coupled via a rotary mechanism of the central stalk subunits to proton translocation. Its function is as follows. Key component of the F(0) channel; it plays a direct role in translocation across the membrane. A homomeric c-ring of between 10-14 subunits forms the central stalk rotor element with the F(1) delta and epsilon subunits. The polypeptide is ATP synthase subunit c, chloroplastic (Chaetosphaeridium globosum (Charophycean green alga)).